The chain runs to 396 residues: Phosphoglycerate kinase (396 aa).

Substrate contacts are provided by residues 21-23 (DLN), arginine 36, 59-62 (HFGR), arginine 118, and arginine 151. ATP contacts are provided by residues lysine 201, glutamate 323, and 353–356 (GGDT).

Belongs to the phosphoglycerate kinase family. In terms of assembly, monomer.

The protein resides in the cytoplasm. The enzyme catalyses (2R)-3-phosphoglycerate + ATP = (2R)-3-phospho-glyceroyl phosphate + ADP. The protein operates within carbohydrate degradation; glycolysis; pyruvate from D-glyceraldehyde 3-phosphate: step 2/5. This chain is Phosphoglycerate kinase, found in Brucella melitensis biotype 1 (strain ATCC 23456 / CCUG 17765 / NCTC 10094 / 16M).